A 396-amino-acid polypeptide reads, in one-letter code: NADH-quinone oxidoreductase subunit D (396 aa).

Belongs to the complex I 49 kDa subunit family. As to quaternary structure, NDH-1 is composed of 14 different subunits. Subunits NuoB, C, D, E, F, and G constitute the peripheral sector of the complex.

The protein localises to the cell inner membrane. The enzyme catalyses a quinone + NADH + 5 H(+)(in) = a quinol + NAD(+) + 4 H(+)(out). NDH-1 shuttles electrons from NADH, via FMN and iron-sulfur (Fe-S) centers, to quinones in the respiratory chain. The immediate electron acceptor for the enzyme in this species is believed to be ubiquinone. Couples the redox reaction to proton translocation (for every two electrons transferred, four hydrogen ions are translocated across the cytoplasmic membrane), and thus conserves the redox energy in a proton gradient. The sequence is that of NADH-quinone oxidoreductase subunit D from Orientia tsutsugamushi (strain Boryong) (Rickettsia tsutsugamushi).